A 108-amino-acid polypeptide reads, in one-letter code: Glutaredoxin-like protein YDR286C homolog (108 aa).

A disulfide bridge connects residues C22 and C25.

The protein belongs to the glutaredoxin family. YDR286C subfamily.

The sequence is that of Glutaredoxin-like protein YDR286C homolog from Dictyostelium discoideum (Social amoeba).